A 304-amino-acid polypeptide reads, in one-letter code: Acetyl-coenzyme A carboxylase carboxyl transferase subunit beta (304 aa).

The region spanning 23-292 (VWTKCDSCGQ…PNPEAPREGV (270 aa)) is the CoA carboxyltransferase N-terminal domain. 4 residues coordinate Zn(2+): Cys-27, Cys-30, Cys-46, and Cys-49. Residues 27-49 (CDSCGQVLYRAELERNLEVCPKC) form a C4-type zinc finger. Residues 284–304 (NPEAPREGVVVPPVPDQEPEA) form a disordered region. Positions 295 to 304 (PPVPDQEPEA) are enriched in pro residues.

This sequence belongs to the AccD/PCCB family. As to quaternary structure, acetyl-CoA carboxylase is a heterohexamer composed of biotin carboxyl carrier protein (AccB), biotin carboxylase (AccC) and two subunits each of ACCase subunit alpha (AccA) and ACCase subunit beta (AccD). Requires Zn(2+) as cofactor.

The protein localises to the cytoplasm. The catalysed reaction is N(6)-carboxybiotinyl-L-lysyl-[protein] + acetyl-CoA = N(6)-biotinyl-L-lysyl-[protein] + malonyl-CoA. It functions in the pathway lipid metabolism; malonyl-CoA biosynthesis; malonyl-CoA from acetyl-CoA: step 1/1. Functionally, component of the acetyl coenzyme A carboxylase (ACC) complex. Biotin carboxylase (BC) catalyzes the carboxylation of biotin on its carrier protein (BCCP) and then the CO(2) group is transferred by the transcarboxylase to acetyl-CoA to form malonyl-CoA. The sequence is that of Acetyl-coenzyme A carboxylase carboxyl transferase subunit beta from Shigella boydii serotype 4 (strain Sb227).